An 879-amino-acid chain; its full sequence is DNA mismatch repair protein MutS (879 aa).

629-636 lines the ATP pocket; sequence GPNMAGKS. Residues 824–845 are disordered; that stretch reads VGGQPQKELSEHKPHQPSLFAP.

It belongs to the DNA mismatch repair MutS family.

This protein is involved in the repair of mismatches in DNA. It is possible that it carries out the mismatch recognition step. This protein has a weak ATPase activity. This is DNA mismatch repair protein MutS from Desulfotalea psychrophila (strain LSv54 / DSM 12343).